The primary structure comprises 412 residues: Protein BTN1 (412 aa).

The signal sequence occupies residues 1-29 (MDRRKLIFGKFWLFGLLNNVLYVVILAAA). 9 helical membrane passes run 41–61 (LILL…PFFI), 70–90 (IWSL…GRLG), 91–111 (VCIV…ITFL), 131–151 (GAGL…KIPV), 154–174 (SLLL…LQVE), 234–254 (VLVV…YLIN), 281–300 (IYVA…RSSG), 307–329 (GLYL…SWYY), and 334–356 (VWVI…VNSF).

It belongs to the battenin family.

It localises to the vacuole membrane. In terms of biological role, involved in vacuolar transport and vacuole pH homeostasis. Also required for cytokinesis. The polypeptide is Protein BTN1 (BTN1) (Eremothecium gossypii (strain ATCC 10895 / CBS 109.51 / FGSC 9923 / NRRL Y-1056) (Yeast)).